A 379-amino-acid polypeptide reads, in one-letter code: Succinyl-diaminopimelate desuccinylase (379 aa).

Position 70 (histidine 70) interacts with Zn(2+). Aspartate 72 is an active-site residue. A Zn(2+)-binding site is contributed by aspartate 103. Glutamate 137 (proton acceptor) is an active-site residue. The Zn(2+) site is built by glutamate 138, glutamate 166, and histidine 352.

This sequence belongs to the peptidase M20A family. DapE subfamily. Homodimer. Zn(2+) serves as cofactor. Requires Co(2+) as cofactor.

The enzyme catalyses N-succinyl-(2S,6S)-2,6-diaminopimelate + H2O = (2S,6S)-2,6-diaminopimelate + succinate. It participates in amino-acid biosynthesis; L-lysine biosynthesis via DAP pathway; LL-2,6-diaminopimelate from (S)-tetrahydrodipicolinate (succinylase route): step 3/3. In terms of biological role, catalyzes the hydrolysis of N-succinyl-L,L-diaminopimelic acid (SDAP), forming succinate and LL-2,6-diaminopimelate (DAP), an intermediate involved in the bacterial biosynthesis of lysine and meso-diaminopimelic acid, an essential component of bacterial cell walls. The polypeptide is Succinyl-diaminopimelate desuccinylase (Paraburkholderia xenovorans (strain LB400)).